The sequence spans 379 residues: Carbamoyl phosphate synthase small chain (379 aa).

Residues 1–183 (MTSQDRSEAV…EAYVVEPDGE (183 aa)) are CPSase. 3 residues coordinate L-glutamine: Ser-51, Gly-235, and Gly-237. The region spanning 185–379 (LYTVVAYDMG…FVELIQANKK (195 aa)) is the Glutamine amidotransferase type-1 domain. Cys-263 acts as the Nucleophile in catalysis. L-glutamine contacts are provided by Phe-264, Gln-267, Asn-305, Gly-307, and Phe-308. Catalysis depends on residues His-353 and Glu-355.

This sequence belongs to the CarA family. In terms of assembly, composed of two chains; the small (or glutamine) chain promotes the hydrolysis of glutamine to ammonia, which is used by the large (or ammonia) chain to synthesize carbamoyl phosphate. Tetramer of heterodimers (alpha,beta)4.

The catalysed reaction is hydrogencarbonate + L-glutamine + 2 ATP + H2O = carbamoyl phosphate + L-glutamate + 2 ADP + phosphate + 2 H(+). The enzyme catalyses L-glutamine + H2O = L-glutamate + NH4(+). Its pathway is amino-acid biosynthesis; L-arginine biosynthesis; carbamoyl phosphate from bicarbonate: step 1/1. It functions in the pathway pyrimidine metabolism; UMP biosynthesis via de novo pathway; (S)-dihydroorotate from bicarbonate: step 1/3. Its function is as follows. Small subunit of the glutamine-dependent carbamoyl phosphate synthetase (CPSase). CPSase catalyzes the formation of carbamoyl phosphate from the ammonia moiety of glutamine, carbonate, and phosphate donated by ATP, constituting the first step of 2 biosynthetic pathways, one leading to arginine and/or urea and the other to pyrimidine nucleotides. The small subunit (glutamine amidotransferase) binds and cleaves glutamine to supply the large subunit with the substrate ammonia. This is Carbamoyl phosphate synthase small chain from Corynebacterium diphtheriae (strain ATCC 700971 / NCTC 13129 / Biotype gravis).